The primary structure comprises 473 residues: Bestrophin-4 (473 aa).

Topologically, residues 1–31 are cytoplasmic; that stretch reads MTVSYTLKVAEARFGGFSGLLLRWRGSIYKL. Ca(2+) is bound at residue Ala10. Residues 32–51 traverse the membrane as a helical segment; that stretch reads LYKEFLLFGALYAVLSITYR. The Extracellular segment spans residues 52-60; the sequence is LLLTQEQRY. The helical transmembrane segment at 61–82 threads the bilayer; sequence VYAQVARYCNRSADLIPLSFVL. Residues 83-237 are Cytoplasmic-facing; the sequence is GFYVTLVVNR…DWISIPLVYT (155 aa). Residues 238-255 form a helical membrane-spanning segment; the sequence is QVVTIAVYSFFALSLVGR. The Extracellular portion of the chain corresponds to 256 to 289; the sequence is QFVEPEAGAAKPQKLLKPGQEPAPALGDPDMYVP. The chain crosses the membrane as a helical span at residues 290–303; the sequence is LTTLLQFFFYAGWL. Residues 304 to 473 lie on the Cytoplasmic side of the membrane; that stretch reads KVAEQIINPF…AESGDEALEP (170 aa). 4 residues coordinate Ca(2+): Gln308, Asn311, Asp316, and Asp319. Disordered regions lie at residues 379–408 and 428–473; these read TFNL…PAAQ and RNFG…ALEP. Positions 396 to 407 are enriched in low complexity; the sequence is ASPGSGRPAPAA. Residues 445–461 are compositionally biased toward basic and acidic residues; it reads FRAEEGGDPEAAARIEE. Acidic residues predominate over residues 462 to 473; that stretch reads ESAESGDEALEP.

It belongs to the anion channel-forming bestrophin (TC 1.A.46) family. Calcium-sensitive chloride channel subfamily. Predominantly found in colon and the weakly in fetal brain, spinal cord, retina, lung, trachea, testis and placenta.

It localises to the cell membrane. It carries out the reaction chloride(in) = chloride(out). The catalysed reaction is hydrogencarbonate(in) = hydrogencarbonate(out). In terms of biological role, ligand-gated anion channel that allows the movement of anions across cell membranes when activated by Calcium (Ca2+). Mediates the movement of hydrogencarbonate and chloride. The chain is Bestrophin-4 from Homo sapiens (Human).